The sequence spans 406 residues: Kelch domain-containing protein 2 (406 aa).

Kelch repeat units follow at residues 31 to 85 (ERSG…NTEG), 92 to 136 (SGSC…ERID), 148 to 207 (LGVW…AWSQ), 221 to 259 (HACATVGNKGFVFGGRYRDARMNDLHYLNLDTWEWNELI), 271 to 311 (HSLT…IQFN), and 322 to 359 (HTACASDEGEVIVFGGCANNLLVHHRAAHSNEVLIFSV).

In terms of assembly, component of a CRL2(KLHDC2) E3 ubiquitin-protein ligase complex, also named ECS(KLHDC2) complex, composed of CUL2, Elongin BC (ELOB and ELOC), RBX1 and substrate-specific adapter KLHDC2. May form oligomers as a KLHDC2-ELOB-ELOC complex; this interaction is autoinhibitory for the E3 ligase complex as the substrate-binding site of KLHDC2 is blocked in the oligomer. Interacts with CREB3; interaction is direct and specific as it does not interact with CREB1, ATF4, ATF6, JUN, FOS, CEBPA or herpes simplex virus transactivator VP16. Post-translationally, autoubiquitinated by the CRL2(KLHDC2) E3 ligase complex.

The protein resides in the nucleus. Its pathway is protein modification; protein ubiquitination. Substrate-recognition component of a Cul2-RING (CRL2) E3 ubiquitin-protein ligase complex of the DesCEND (destruction via C-end degrons) pathway, which recognizes a C-degron located at the extreme C terminus of target proteins, leading to their ubiquitination and degradation. The C-degron recognized by the DesCEND pathway is usually a motif of less than ten residues and can be present in full-length proteins, truncated proteins or proteolytically cleaved forms. The CRL2(KLHDC2) complex specifically recognizes proteins with a diglycine (Gly-Gly) at the C-terminus, leading to their ubiquitination and degradation. The CRL2(KLHDC2) complex mediates ubiquitination and degradation of truncated SELENOK and SELENOS selenoproteins produced by failed UGA/Sec decoding, which end with a diglycine. The CRL2(KLHDC2) complex also recognizes proteolytically cleaved proteins ending with Gly-Gly, such as the N-terminal fragment of USP1, leading to their degradation. May also act as an indirect repressor of CREB3-mediated transcription by interfering with CREB3-DNA-binding. This Rattus norvegicus (Rat) protein is Kelch domain-containing protein 2.